The sequence spans 253 residues: Histone H1.4 (253 aa).

Positions 1 to 33 are enriched in low complexity; the sequence is MSDVAVAADTTETPAAPTKASKATKASKATKAS. The interval 1-43 is disordered; the sequence is MSDVAVAADTTETPAAPTKASKATKASKATKASKATKAKTTKV. Residue Ser2 is modified to N-acetylserine. The region spanning 51–127 is the H15 domain; sequence AHPPFINMVT…GANGRFRLAE (77 aa). The segment at 134 to 253 is disordered; the sequence is KSPAAAKKDA…KKAPAAAPEA (120 aa). Basic and acidic residues-rich tracts occupy residues 139–149 and 188–200; these read AKKDATGEKKA and AAGDKAKKTEVKV. Composition is skewed to basic residues over residues 201-210 and 234-244; these read KKVKSPKKIA and APKKAAAKPAK.

Belongs to the histone H1/H5 family.

It localises to the nucleus. Its subcellular location is the chromosome. Its function is as follows. Histones H1 are necessary for the condensation of nucleosome chains into higher-order structures. In Caenorhabditis elegans, this protein is Histone H1.4 (hil-4).